Consider the following 103-residue polypeptide: Enhancer of rudimentary homolog (103 aa).

The protein belongs to the E(R) family. As to quaternary structure, homodimer.

May have a role in the cell cycle. This is Enhancer of rudimentary homolog from Caenorhabditis elegans.